A 173-amino-acid chain; its full sequence is Small ribosomal subunit protein uS13 (173 aa).

Positions 130–143 are enriched in basic residues; sequence GVRHKRGQKVRGQR. Positions 130-155 are disordered; the sequence is GVRHKRGQKVRGQRTKSTGRTEGTIG.

Belongs to the universal ribosomal protein uS13 family. As to quaternary structure, part of the 30S ribosomal subunit. Forms a loose heterodimer with protein S19. Forms two bridges to the 50S subunit in the 70S ribosome.

In terms of biological role, located at the top of the head of the 30S subunit, it contacts several helices of the 16S rRNA. In the 70S ribosome it contacts the 23S rRNA (bridge B1a) and protein L5 of the 50S subunit (bridge B1b), connecting the 2 subunits; these bridges are implicated in subunit movement. The protein is Small ribosomal subunit protein uS13 of Haloquadratum walsbyi (strain DSM 16790 / HBSQ001).